We begin with the raw amino-acid sequence, 271 residues long: Low choriolytic enzyme (271 aa).

Residues 1–20 (MDLLAKASVLLLLLLSLSNA) form the signal peptide. The propeptide at 21 to 71 (QTDNMEEAENGSSKEEIDESELEDVSSIIFRMNNNSMEELLEGDLVLPKTR) is activation peptide. 2 N-linked (GlcNAc...) asparagine glycosylation sites follow: asparagine 30 and asparagine 54. Residues 72 to 271 (NAMKCFGAPD…ILRVNKLYKC (200 aa)) form the Peptidase M12A domain. 3 disulfide bridges follow: cysteine 76/cysteine 83, cysteine 123/cysteine 271, and cysteine 144/cysteine 164. Histidine 172 provides a ligand contact to Zn(2+). The active site involves glutamate 173. The Zn(2+) site is built by histidine 176 and histidine 182. Asparagine 211 carries N-linked (GlcNAc...) asparagine glycosylation.

It depends on Zn(2+) as a cofactor.

The protein localises to the zymogen granule. The enzyme catalyses Hydrolysis of the inner layer of fish egg envelope. Also hydrolysis of casein and small molecule substrates such as succinyl-Leu-Leu-Val-Tyr-|-7-(4-methyl)coumarylamide.. In terms of biological role, participates in the breakdown of the egg envelope, which is derived from the egg extracellular matrix, at the time of hatching. Thus allowing the newly hatched fish to swim free. LCE solubilizes the egg envelope only after it has been swollen by the action of HCE. This is Low choriolytic enzyme (lce) from Oryzias latipes (Japanese rice fish).